The following is a 300-amino-acid chain: N-acetylmuramic acid 6-phosphate etherase 2 (300 aa).

Residues 57–220 (ITAAFANGGR…TTGAMIRSGK (164 aa)) enclose the SIS domain. Glu-85 acts as the Proton donor in catalysis. Glu-116 is an active-site residue.

It belongs to the GCKR-like family. MurNAc-6-P etherase subfamily. In terms of assembly, homodimer.

It carries out the reaction N-acetyl-D-muramate 6-phosphate + H2O = N-acetyl-D-glucosamine 6-phosphate + (R)-lactate. It functions in the pathway amino-sugar metabolism; 1,6-anhydro-N-acetylmuramate degradation. It participates in amino-sugar metabolism; N-acetylmuramate degradation. Its pathway is cell wall biogenesis; peptidoglycan recycling. Its function is as follows. Specifically catalyzes the cleavage of the D-lactyl ether substituent of MurNAc 6-phosphate, producing GlcNAc 6-phosphate and D-lactate. Together with AnmK, is also required for the utilization of anhydro-N-acetylmuramic acid (anhMurNAc) either imported from the medium or derived from its own cell wall murein, and thus plays a role in cell wall recycling. In Vibrio parahaemolyticus serotype O3:K6 (strain RIMD 2210633), this protein is N-acetylmuramic acid 6-phosphate etherase 2.